A 688-amino-acid chain; its full sequence is Elongation factor G (688 aa).

Positions 8-282 constitute a tr-type G domain; it reads EKTRNIGIIA…AVVDYLPAPC (275 aa). GTP is bound by residues 17–24, 81–85, and 135–138; these read AHIDAGKT, DTPGH, and NKMD.

The protein belongs to the TRAFAC class translation factor GTPase superfamily. Classic translation factor GTPase family. EF-G/EF-2 subfamily.

Its subcellular location is the cytoplasm. Its function is as follows. Catalyzes the GTP-dependent ribosomal translocation step during translation elongation. During this step, the ribosome changes from the pre-translocational (PRE) to the post-translocational (POST) state as the newly formed A-site-bound peptidyl-tRNA and P-site-bound deacylated tRNA move to the P and E sites, respectively. Catalyzes the coordinated movement of the two tRNA molecules, the mRNA and conformational changes in the ribosome. The chain is Elongation factor G from Aster yellows witches'-broom phytoplasma (strain AYWB).